Consider the following 436-residue polypeptide: Cyclic nucleotide-binding domain-containing protein 1 (436 aa).

Over residues 89–105 the composition is skewed to basic and acidic residues; sequence EQRELNEGKEESQHQQP. The segment at 89 to 108 is disordered; the sequence is EQRELNEGKEESQHQQPDDS. 322–436 contacts a nucleoside 3',5'-cyclic phosphate; it reads YYEEWPTLSI…IIEDKDLFVA (115 aa).

This chain is Cyclic nucleotide-binding domain-containing protein 1 (CNBD1), found in Homo sapiens (Human).